Here is a 350-residue protein sequence, read N- to C-terminus: Biotin synthase (350 aa).

A Radical SAM core domain is found at 38-256 (NHVQVSTLLS…IAVARIMMPE (219 aa)). [4Fe-4S] cluster-binding residues include Cys53, Cys57, and Cys60. [2Fe-2S] cluster is bound by residues Cys97, Cys128, Cys188, and Arg260.

This sequence belongs to the radical SAM superfamily. Biotin synthase family. In terms of assembly, homodimer. [4Fe-4S] cluster serves as cofactor. It depends on [2Fe-2S] cluster as a cofactor.

It catalyses the reaction (4R,5S)-dethiobiotin + (sulfur carrier)-SH + 2 reduced [2Fe-2S]-[ferredoxin] + 2 S-adenosyl-L-methionine = (sulfur carrier)-H + biotin + 2 5'-deoxyadenosine + 2 L-methionine + 2 oxidized [2Fe-2S]-[ferredoxin]. It participates in cofactor biosynthesis; biotin biosynthesis; biotin from 7,8-diaminononanoate: step 2/2. Its function is as follows. Catalyzes the conversion of dethiobiotin (DTB) to biotin by the insertion of a sulfur atom into dethiobiotin via a radical-based mechanism. The protein is Biotin synthase of Aliivibrio fischeri (strain MJ11) (Vibrio fischeri).